A 157-amino-acid chain; its full sequence is Baculoviral IAP repeat-containing protein 5.2-B (157 aa).

The BIR repeat unit spans residues 31 to 101 (RLRTFSNWPF…KHSPSCLFIA (71 aa)). Threonine 47 is modified (phosphothreonine; by CDK1). 4 residues coordinate Zn(2+): cysteine 70, cysteine 73, histidine 90, and cysteine 97.

The protein belongs to the IAP family. As to quaternary structure, component of the CPC at least composed of survivin/birc5, incenp, cdca8/borealin and/or cdca9/dasra-A, and aurkb/aurora-B. Interacts directly with incenp (via N-terminus). Interacts with rxra; the interaction is stronger in the absence of 9-cis retinoic acids. In terms of processing, ubiquitination is required for centrosome-targeting. As to expression, exhibits strong and homogeneous expression in developing oocytes. In embryos, expressed in the animal hemisphere from one-cell to yolk plug stages, and highly expressed in the future brain and dorsal region of the neural tube at the neurula stage and early tail-bud stage. At tadpole stages, expression is restricted at a low level to the head region.

Its subcellular location is the cytoplasm. It is found in the nucleus. The protein localises to the chromosome. The protein resides in the centromere. It localises to the cytoskeleton. Its subcellular location is the spindle. Its function is as follows. Does not appear to exhibit anti-apoptotic activity. Plays a role in increasing blood vessel size during development. Component of the chromosomal passenger complex (CPC), a complex that acts as a key regulator of mitosis. The CPC complex has essential functions at the centromere in ensuring correct chromosome alignment and segregation and is required for chromatin-induced microtubule stabilization and spindle assembly. This chain is Baculoviral IAP repeat-containing protein 5.2-B (birc5.2-b), found in Xenopus laevis (African clawed frog).